A 542-amino-acid polypeptide reads, in one-letter code: Carboxypeptidase Y (542 aa).

A signal peptide spans 1–21 (MKLSKSTLIATLALTATSTNA). The propeptide occupies 22–127 (LVVQNPFSNI…DAQVPNHKLR (106 aa)). Disulfide bonds link Cys182–Cys421, Cys316–Cys330, Cys340–Cys363, Cys347–Cys356, and Cys385–Cys391. N-linked (GlcNAc...) asparagine glycosylation occurs at Asn213. The active site involves Ser269. Asn291 is a glycosylation site (N-linked (GlcNAc...) asparagine). Asp461 is an active-site residue. Cys464 contributes to the substrate binding site. His518 is an active-site residue. A substrate-binding site is contributed by Met519.

This sequence belongs to the peptidase S10 family.

It is found in the vacuole. It carries out the reaction Release of a C-terminal amino acid with broad specificity.. Its function is as follows. Involved in degradation of small peptides. This chain is Carboxypeptidase Y (CPY1), found in Candida albicans (Yeast).